The primary structure comprises 229 residues: Histone H1 (229 aa).

2 disordered regions span residues 1 to 52 and 125 to 229; these read MADT…SSHP and APAL…RTRK. Residues 32–45 are compositionally biased toward basic residues; the sequence is KEKKKVIAAKKPKS. The H15 domain occupies 50–119; the sequence is SHPSFFEMIS…KVKNSFKLPS (70 aa). A compositionally biased stretch (low complexity) spans 125-138; the sequence is APALAKKPTIPKPK. The span at 139–160 shows a compositional bias: basic residues; the sequence is VAAKPKTAKIGAKPKAKAKVAA. 2 stretches are compositionally biased toward low complexity: residues 161–177 and 185–205; these read KTKA…PAAK and KPKT…VASP. Residues 206–229 show a composition bias toward basic residues; it reads GKKKAVPVKKVKTVKSPAGKRTRK.

Belongs to the histone H1/H5 family.

The protein localises to the nucleus. It is found in the chromosome. Its function is as follows. Histones H1 are necessary for the condensation of nucleosome chains into higher-order structures. The chain is Histone H1 from Euphorbia esula (Leafy spurge).